The following is a 227-amino-acid chain: Transmembrane emp24 domain-containing protein 1 (227 aa).

An N-terminal signal peptide occupies residues 1–24 (MMAAGAAVALALWLLLPAVGVGEA). Over 25–194 (GPPPIQDGEF…LQEDNLERVN (170 aa)) the chain is Extracellular. Residues 43-125 (KQCFYQSAPA…EKLVFFELIF (83 aa)) form the GOLD domain. Positions 145–170 (EMLDVKMEDIKESIETMRTRLERSIQ) form a coiled coil. The helical transmembrane segment at 195-215 (FWSAANVAVLLLVAVLQVCTL) threads the bilayer. The Cytoplasmic portion of the chain corresponds to 216–227 (KRFFHDKRPVPT). A COPII vesicle coat-binding motif is present at residues 218–219 (FF). The COPI vesicle coat-binding signature appears at 218–227 (FFHDKRPVPT).

It belongs to the EMP24/GP25L family. In terms of assembly, homodimer in endoplasmic reticulum, endoplasmic reticulum-Golgi intermediate compartment and cis-Golgi network. Interacts with IL1RL1. Interacts with RNF26; this interaction is important to modulate innate immune signaling through the cGAS-STING pathway. In terms of tissue distribution, widely expressed.

The protein resides in the cell membrane. Its subcellular location is the endoplasmic reticulum membrane. The protein localises to the golgi apparatus. It is found in the cis-Golgi network membrane. It localises to the endoplasmic reticulum-Golgi intermediate compartment membrane. Its function is as follows. Potential role in vesicular protein trafficking, mainly in the early secretory pathway. May act as a cargo receptor at the lumenal side for incorporation of secretory cargo molecules into transport vesicles and may be involved in vesicle coat formation at the cytoplasmic side. Plays a positive role in IL-33-mediated IL-8 and IL-6 production by interacting with interleukin-33 receptor IL1RL1. Plays also a role in the modulation of innate immune signaling through the cGAS-STING pathway by interacting with RNF26. In Mus musculus (Mouse), this protein is Transmembrane emp24 domain-containing protein 1 (Tmed1).